The following is a 349-amino-acid chain: Large ribosomal subunit protein uL2mz, N-terminal part (349 aa).

The protein belongs to the universal ribosomal protein uL2 family. As to quaternary structure, component of the mitochondrial ribosome large subunit.

Its subcellular location is the mitochondrion. This is Large ribosomal subunit protein uL2mz, N-terminal part from Arabidopsis thaliana (Mouse-ear cress).